A 310-amino-acid chain; its full sequence is Acetylglutamate kinase (310 aa).

Substrate-binding positions include 83 to 84 (GG), R105, and N207.

It belongs to the acetylglutamate kinase family. ArgB subfamily.

The protein localises to the cytoplasm. It carries out the reaction N-acetyl-L-glutamate + ATP = N-acetyl-L-glutamyl 5-phosphate + ADP. Its pathway is amino-acid biosynthesis; L-arginine biosynthesis; N(2)-acetyl-L-ornithine from L-glutamate: step 2/4. In terms of biological role, catalyzes the ATP-dependent phosphorylation of N-acetyl-L-glutamate. This Ralstonia nicotianae (strain ATCC BAA-1114 / GMI1000) (Ralstonia solanacearum) protein is Acetylglutamate kinase.